The following is a 419-amino-acid chain: 5-methylthioadenosine/S-adenosylhomocysteine deaminase (419 aa).

Zn(2+)-binding residues include His58 and His60. The substrate site is built by Glu87 and His179. His206 serves as a coordination point for Zn(2+). Residues Glu209 and Asp294 each coordinate substrate. Zn(2+) is bound at residue Asp294.

It belongs to the metallo-dependent hydrolases superfamily. MTA/SAH deaminase family. Zn(2+) serves as cofactor.

The catalysed reaction is S-adenosyl-L-homocysteine + H2O + H(+) = S-inosyl-L-homocysteine + NH4(+). It carries out the reaction S-methyl-5'-thioadenosine + H2O + H(+) = S-methyl-5'-thioinosine + NH4(+). Its function is as follows. Catalyzes the deamination of 5-methylthioadenosine and S-adenosyl-L-homocysteine into 5-methylthioinosine and S-inosyl-L-homocysteine, respectively. Is also able to deaminate adenosine. The chain is 5-methylthioadenosine/S-adenosylhomocysteine deaminase from Pyrococcus furiosus (strain ATCC 43587 / DSM 3638 / JCM 8422 / Vc1).